The sequence spans 237 residues: Ubiquinone/menaquinone biosynthesis C-methyltransferase UbiE (237 aa).

Residues threonine 60 and aspartate 80 each coordinate S-adenosyl-L-methionine.

It belongs to the class I-like SAM-binding methyltransferase superfamily. MenG/UbiE family.

It catalyses the reaction a 2-demethylmenaquinol + S-adenosyl-L-methionine = a menaquinol + S-adenosyl-L-homocysteine + H(+). It carries out the reaction a 2-methoxy-6-(all-trans-polyprenyl)benzene-1,4-diol + S-adenosyl-L-methionine = a 5-methoxy-2-methyl-3-(all-trans-polyprenyl)benzene-1,4-diol + S-adenosyl-L-homocysteine + H(+). The protein operates within quinol/quinone metabolism; menaquinone biosynthesis; menaquinol from 1,4-dihydroxy-2-naphthoate: step 2/2. It participates in cofactor biosynthesis; ubiquinone biosynthesis. Functionally, methyltransferase required for the conversion of demethylmenaquinol (DMKH2) to menaquinol (MKH2) and the conversion of 2-polyprenyl-6-methoxy-1,4-benzoquinol (DDMQH2) to 2-polyprenyl-3-methyl-6-methoxy-1,4-benzoquinol (DMQH2). In Syntrophotalea carbinolica (strain DSM 2380 / NBRC 103641 / GraBd1) (Pelobacter carbinolicus), this protein is Ubiquinone/menaquinone biosynthesis C-methyltransferase UbiE.